The chain runs to 298 residues: Protoheme IX farnesyltransferase (298 aa).

Helical transmembrane passes span 29 to 49 (LIVF…PPLL), 51 to 71 (FGVA…LNCL), 97 to 117 (ETVT…HGFI), 120 to 140 (LTMW…TLIL), 148 to 168 (IVIG…AMTG), 175 to 195 (LVLF…LACY), 221 to 241 (ILWY…LGMS), 243 to 263 (GFYL…AIAL), and 278 to 298 (YSIL…LIVL).

Belongs to the UbiA prenyltransferase family. Protoheme IX farnesyltransferase subfamily.

It is found in the cell inner membrane. It carries out the reaction heme b + (2E,6E)-farnesyl diphosphate + H2O = Fe(II)-heme o + diphosphate. The protein operates within porphyrin-containing compound metabolism; heme O biosynthesis; heme O from protoheme: step 1/1. Its function is as follows. Converts heme B (protoheme IX) to heme O by substitution of the vinyl group on carbon 2 of heme B porphyrin ring with a hydroxyethyl farnesyl side group. In Dechloromonas aromatica (strain RCB), this protein is Protoheme IX farnesyltransferase.